A 601-amino-acid polypeptide reads, in one-letter code: Elongation factor 4 (601 aa).

One can recognise a tr-type G domain in the interval 6-188 (QCIRNFSIIA…AVVAKVPPPQ (183 aa)). GTP contacts are provided by residues 18 to 23 (DHGKST) and 135 to 138 (NKID).

This sequence belongs to the TRAFAC class translation factor GTPase superfamily. Classic translation factor GTPase family. LepA subfamily.

It localises to the cell membrane. The catalysed reaction is GTP + H2O = GDP + phosphate + H(+). Its function is as follows. Required for accurate and efficient protein synthesis under certain stress conditions. May act as a fidelity factor of the translation reaction, by catalyzing a one-codon backward translocation of tRNAs on improperly translocated ribosomes. Back-translocation proceeds from a post-translocation (POST) complex to a pre-translocation (PRE) complex, thus giving elongation factor G a second chance to translocate the tRNAs correctly. Binds to ribosomes in a GTP-dependent manner. This Desulfitobacterium hafniense (strain DSM 10664 / DCB-2) protein is Elongation factor 4.